A 344-amino-acid polypeptide reads, in one-letter code: Methionine synthase (344 aa).

Zn(2+)-binding residues include H211, C213, E236, and C315.

Belongs to the archaeal MetE family. Zn(2+) is required as a cofactor.

Its pathway is amino-acid biosynthesis; L-methionine biosynthesis via de novo pathway. Catalyzes the transfer of a methyl group to L-homocysteine resulting in methionine formation. The physiological methyl donor is unknown. The protein is Methionine synthase of Thermoplasma volcanium (strain ATCC 51530 / DSM 4299 / JCM 9571 / NBRC 15438 / GSS1).